Here is a 107-residue protein sequence, read N- to C-terminus: ESAT-6-like protein EsxD (107 aa).

This sequence belongs to the WXG100 family. CFP-10 subfamily.

The protein localises to the secreted. The chain is ESAT-6-like protein EsxD from Mycobacterium tuberculosis (strain ATCC 25618 / H37Rv).